The following is a 471-amino-acid chain: Glutamate--tRNA ligase 2 (471 aa).

The short motif at 15 to 25 (PSPTGYLHIGG) is the 'HIGH' region element. The short motif at 243–247 (KLSKR) is the 'KMSKS' region element. Position 246 (Lys-246) interacts with ATP.

Belongs to the class-I aminoacyl-tRNA synthetase family. Glutamate--tRNA ligase type 1 subfamily. As to quaternary structure, monomer.

Its subcellular location is the cytoplasm. It catalyses the reaction tRNA(Glu) + L-glutamate + ATP = L-glutamyl-tRNA(Glu) + AMP + diphosphate. Its function is as follows. Catalyzes the attachment of glutamate to tRNA(Glu) in a two-step reaction: glutamate is first activated by ATP to form Glu-AMP and then transferred to the acceptor end of tRNA(Glu). The protein is Glutamate--tRNA ligase 2 of Cereibacter sphaeroides (strain ATCC 17025 / ATH 2.4.3) (Rhodobacter sphaeroides).